Consider the following 171-residue polypeptide: S-ribosylhomocysteine lyase (171 aa).

Fe cation contacts are provided by histidine 54, histidine 58, and cysteine 128.

This sequence belongs to the LuxS family. In terms of assembly, homodimer. The cofactor is Fe cation.

It catalyses the reaction S-(5-deoxy-D-ribos-5-yl)-L-homocysteine = (S)-4,5-dihydroxypentane-2,3-dione + L-homocysteine. In terms of biological role, involved in the synthesis of autoinducer 2 (AI-2) which is secreted by bacteria and is used to communicate both the cell density and the metabolic potential of the environment. The regulation of gene expression in response to changes in cell density is called quorum sensing. Catalyzes the transformation of S-ribosylhomocysteine (RHC) to homocysteine (HC) and 4,5-dihydroxy-2,3-pentadione (DPD). In Yersinia enterocolitica serotype O:8 / biotype 1B (strain NCTC 13174 / 8081), this protein is S-ribosylhomocysteine lyase.